A 301-amino-acid chain; its full sequence is uncharacterized protein (301 aa).

Active-site charge relay system residues include Ser44 and Tyr107. Tyr133 functions as the Proton donor in the catalytic mechanism. Lys162 acts as the Schiff-base intermediate with substrate in catalysis.

This sequence belongs to the DapA family. In terms of assembly, homotetramer.

The protein resides in the cytoplasm. This is an uncharacterized protein from Pyrobaculum islandicum (strain DSM 4184 / JCM 9189 / GEO3).